The following is a 130-amino-acid chain: L-ectoine synthase (130 aa).

This sequence belongs to the ectoine synthase family.

It catalyses the reaction (2S)-4-acetamido-2-aminobutanoate = L-ectoine + H2O. The protein operates within amine and polyamine biosynthesis; ectoine biosynthesis; L-ectoine from L-aspartate 4-semialdehyde: step 3/3. Its function is as follows. Catalyzes the circularization of gamma-N-acetyl-alpha,gamma-diaminobutyric acid (ADABA) to ectoine (1,4,5,6-tetrahydro-2-methyl-4-pyrimidine carboxylic acid), which is an excellent osmoprotectant. This chain is L-ectoine synthase, found in Mycolicibacterium gilvum (strain PYR-GCK) (Mycobacterium gilvum (strain PYR-GCK)).